Here is a 390-residue protein sequence, read N- to C-terminus: Monomeric sarcosine oxidase (390 aa).

Residue 6–36 (DVIVVGAGSMGMAAGYQLAKQGVKTLLVDAF) coordinates FAD. Position 316 is an S-8alpha-FAD cysteine (Cys-316).

Monomer. FAD serves as cofactor.

It is found in the cytoplasm. The enzyme catalyses sarcosine + O2 + H2O = formaldehyde + glycine + H2O2. With respect to regulation, pyrrole-2-carboxylate is a competitive inhibitor. N-(cyclopropyl)glycine (CPG) is a mechanism-based inhibitor and inactivates the enzyme by covalently modifying the flavin. Catalyzes the oxidative demethylation of sarcosine. Can also oxidize other secondary amino acids such as N-methyl-L-alanine. This Bacillus sp. (strain B-0618) protein is Monomeric sarcosine oxidase (soxA).